Here is a 101-residue protein sequence, read N- to C-terminus: Iron-sulfur cluster assembly protein CyaY (101 aa).

The protein belongs to the frataxin family.

Its function is as follows. Involved in iron-sulfur (Fe-S) cluster assembly. May act as a regulator of Fe-S biogenesis. This chain is Iron-sulfur cluster assembly protein CyaY, found in Haemophilus influenzae (strain 86-028NP).